We begin with the raw amino-acid sequence, 1357 residues long: DNA-directed RNA polymerase subunit beta (1357 aa).

This sequence belongs to the RNA polymerase beta chain family. As to quaternary structure, the RNAP catalytic core consists of 2 alpha, 1 beta, 1 beta' and 1 omega subunit. When a sigma factor is associated with the core the holoenzyme is formed, which can initiate transcription.

It carries out the reaction RNA(n) + a ribonucleoside 5'-triphosphate = RNA(n+1) + diphosphate. Functionally, DNA-dependent RNA polymerase catalyzes the transcription of DNA into RNA using the four ribonucleoside triphosphates as substrates. The sequence is that of DNA-directed RNA polymerase subunit beta from Pseudomonas syringae pv. tomato (strain ATCC BAA-871 / DC3000).